The sequence spans 329 residues: MRCSLRGCVQGRGGKSGVSLSKFSPKKMSFFFIFMVIFCIQSLVALLQNGFLATVLGREWVRSQGLPAGDMIVACLAASRFCLHGVAIVNNFLTFVKLWSQKIYFSVLWDFVNTVNFWCTTWLAIFYCVKISSFSHPIFFWIKWRISRSVPRLLLGSLVIGGLSAVSSATGNTIAFQMTACENYTLAYRTRAFYAYYFRCHAMLMWIIPFFLFLLSVILLMFSLYRHLEHMRYRRPWSHDYSTQAHTMALKSLAFFLVFYTSYVLFLVISVTRVVNVHSSWHWAWEVITYMGILLHSTILTLSNPKMRKALKIKFPDLCVARSQDKRRG.

Residues 1-27 lie on the Extracellular side of the membrane; that stretch reads MRCSLRGCVQGRGGKSGVSLSKFSPKK. The helical transmembrane segment at 28–48 threads the bilayer; it reads MSFFFIFMVIFCIQSLVALLQ. The Cytoplasmic portion of the chain corresponds to 49–68; it reads NGFLATVLGREWVRSQGLPA. A helical membrane pass occupies residues 69-89; that stretch reads GDMIVACLAASRFCLHGVAIV. The Extracellular segment spans residues 90 to 121; that stretch reads NNFLTFVKLWSQKIYFSVLWDFVNTVNFWCTT. Residues 122-142 form a helical membrane-spanning segment; that stretch reads WLAIFYCVKISSFSHPIFFWI. Residues 143 to 153 are Cytoplasmic-facing; that stretch reads KWRISRSVPRL. A helical membrane pass occupies residues 154-174; that stretch reads LLGSLVIGGLSAVSSATGNTI. Residues 175–201 lie on the Extracellular side of the membrane; it reads AFQMTACENYTLAYRTRAFYAYYFRCH. Residue Asn-183 is glycosylated (N-linked (GlcNAc...) asparagine). The chain crosses the membrane as a helical span at residues 202–222; it reads AMLMWIIPFFLFLLSVILLMF. Over 223–251 the chain is Cytoplasmic; the sequence is SLYRHLEHMRYRRPWSHDYSTQAHTMALK. The helical transmembrane segment at 252-272 threads the bilayer; that stretch reads SLAFFLVFYTSYVLFLVISVT. Over 273–282 the chain is Extracellular; sequence RVVNVHSSWH. Residues 283–303 form a helical membrane-spanning segment; that stretch reads WAWEVITYMGILLHSTILTLS. At 304-329 the chain is on the cytoplasmic side; the sequence is NPKMRKALKIKFPDLCVARSQDKRRG.

The protein belongs to the G-protein coupled receptor T2R family. As to expression, expressed in tongue and gastrointestinal tract.

The protein resides in the membrane. Functionally, putative taste receptor which may play a role in the perception of bitterness. The protein is Taste receptor type 2 member 134 of Rattus norvegicus (Rat).